The chain runs to 438 residues: (3,5-dihydroxyphenyl)acetyl-CoA 1,2-dioxygenase (438 aa).

Substrate contacts are provided by residues Asp-183, Glu-189, 222-225 (HPRY), 233-238 (AGINLK), Gly-296, 325-327 (IPG), and Gln-416.

It belongs to the enoyl-CoA hydratase/isomerase family. In terms of assembly, homohexamer; dimer of trimers.

The enzyme catalyses (3,5-dihydroxyphenyl)acetyl-CoA + O2 = 2-(3,5-dihydroxyphenyl)-2-oxoacetate + CoA + H(+). Inhibited by DPA-S-(N-acetylcysteamine). In terms of biological role, involved in the biosynthesis of the nonproteinogenic amino acid monomer (S)-3,5-dihydroxyphenylglycine (Dpg) responsible of the production of vancomycin and teicoplanin antibiotics. Catalyzes the unusual conversion 3,5-dihydroxyphenylacetyl-CoA (DPA-CoA) to 3,5-dihydroxyphenylglyoxylate. DpgC performed a net four-electron oxidation of the benzylic carbon of DPA-CoA and the hydrolysis of the thioester bond to generate free CoA. DpgC has the ability to process a diverse range of substituted phenylacetyl-CoA substrates. The chain is (3,5-dihydroxyphenyl)acetyl-CoA 1,2-dioxygenase from Streptomyces toyocaensis.